Consider the following 620-residue polypeptide: Chaperone protein HscA homolog (620 aa).

The protein belongs to the heat shock protein 70 family.

Functionally, chaperone involved in the maturation of iron-sulfur cluster-containing proteins. Has a low intrinsic ATPase activity which is markedly stimulated by HscB. This Paracidovorax citrulli (strain AAC00-1) (Acidovorax citrulli) protein is Chaperone protein HscA homolog.